The chain runs to 366 residues: Putative neutrophil cytosol factor 1C (366 aa).

One can recognise a PX domain in the interval 1 to 101 (MYMFLVKWQD…DFFKVRPDDL (101 aa)). 2 SH3 domains span residues 132-191 (IILQ…PLDS) and 202-261 (YAGE…KSGQ). Positions 261 to 366 (QDVSQAQRQI…STKRKLASAV (106 aa)) are disordered. 2 positions are modified to phosphoserine: Ser279 and Ser280. Residues 285-294 (HSIHQRSRKR) show a composition bias toward basic residues. 4 positions are modified to phosphoserine: Ser296, Ser304, Ser321, and Ser324.

It localises to the cytoplasm. In terms of biological role, may be required for activation of the latent NADPH oxidase (necessary for superoxide production). This Homo sapiens (Human) protein is Putative neutrophil cytosol factor 1C (NCF1C).